A 380-amino-acid polypeptide reads, in one-letter code: Set1 complex component swd3 (380 aa).

7 WD repeats span residues 52–91 (GHEK…LECT), 94–133 (GHYR…SVRC), 136–177 (GHTN…RMLP), 179–219 (HSEP…KTLV), 221–262 (PINV…RIFD), 291–330 (NDSS…IIDD), and 335–374 (SDDP…SKHE). Position 379 is a phosphoserine (Ser379).

Component of the Set1 complex composed of ash2, sdc1, set1, shg1, spp1, swd1, swd2 and swd3.

It localises to the nucleus. Functionally, the Set1 complex specifically methylates 'Lys-4' of histone H3. The chain is Set1 complex component swd3 from Schizosaccharomyces pombe (strain 972 / ATCC 24843) (Fission yeast).